Reading from the N-terminus, the 944-residue chain is Putative ATP-dependent RNA helicase (944 aa).

The region spanning 66–235 (TTPRSPIDGI…VPLHNLLMKL (170 aa)) is the Helicase ATP-binding domain. 79-86 (HGVGTGKT) is a binding site for ATP. A DEAH box motif is present at residues 183-186 (DEAH). The Helicase C-terminal domain maps to 451 to 523 (CLTREVMTVP…QIIGRGIRYQ (73 aa)).

The protein belongs to the DEAD box helicase family. DEAH subfamily.

It catalyses the reaction ATP + H2O = ADP + phosphate + H(+). The chain is Putative ATP-dependent RNA helicase from Heliothis virescens ascovirus 3e (HvAV-3e).